We begin with the raw amino-acid sequence, 936 residues long: Protein SIEL (936 aa).

In terms of assembly, interacts with SHR, MGP, SCR, JKD, CPC, TMO7 and AGL21, but not with LFY or STM.

The protein resides in the nucleus. It localises to the endosome. It is found in the cytoplasm. The protein localises to the cell cortex. In terms of biological role, intracellular shuttle that promotes movement of SHR from the stele into the endodermis. Required for SHR association to endosomes and localization, and for intercellular movement of SHR. The polypeptide is Protein SIEL (Arabidopsis thaliana (Mouse-ear cress)).